Reading from the N-terminus, the 373-residue chain is tRNA N6-adenosine threonylcarbamoyltransferase (373 aa).

The a divalent metal cation site is built by histidine 133, histidine 137, and tyrosine 154. Substrate is bound by residues 154-158 (YVSGG), aspartate 186, glycine 201, glutamate 205, and asparagine 302. Aspartate 331 provides a ligand contact to a divalent metal cation.

It belongs to the KAE1 / TsaD family. Component of the EKC/KEOPS complex composed of at least BUD32, CGI121, GON7, KAE1 and PCC1; the whole complex dimerizes. Requires a divalent metal cation as cofactor.

It is found in the cytoplasm. The protein resides in the nucleus. The enzyme catalyses L-threonylcarbamoyladenylate + adenosine(37) in tRNA = N(6)-L-threonylcarbamoyladenosine(37) in tRNA + AMP + H(+). Component of the EKC/KEOPS complex that is required for the formation of a threonylcarbamoyl group on adenosine at position 37 (t(6)A37) in tRNAs that read codons beginning with adenine. The complex is probably involved in the transfer of the threonylcarbamoyl moiety of threonylcarbamoyl-AMP (TC-AMP) to the N6 group of A37. KAE1 likely plays a direct catalytic role in this reaction, but requires other protein(s) of the complex to fulfill this activity. The EKC/KEOPS complex also promotes both telomere uncapping and telomere elongation. The complex is required for efficient recruitment of transcriptional coactivators. This chain is tRNA N6-adenosine threonylcarbamoyltransferase, found in Debaryomyces hansenii (strain ATCC 36239 / CBS 767 / BCRC 21394 / JCM 1990 / NBRC 0083 / IGC 2968) (Yeast).